A 110-amino-acid chain; its full sequence is Large ribosomal subunit protein uL22 (110 aa).

The protein belongs to the universal ribosomal protein uL22 family. Part of the 50S ribosomal subunit.

In terms of biological role, this protein binds specifically to 23S rRNA; its binding is stimulated by other ribosomal proteins, e.g. L4, L17, and L20. It is important during the early stages of 50S assembly. It makes multiple contacts with different domains of the 23S rRNA in the assembled 50S subunit and ribosome. Functionally, the globular domain of the protein is located near the polypeptide exit tunnel on the outside of the subunit, while an extended beta-hairpin is found that lines the wall of the exit tunnel in the center of the 70S ribosome. This chain is Large ribosomal subunit protein uL22, found in Vibrio cholerae serotype O1 (strain ATCC 39541 / Classical Ogawa 395 / O395).